The chain runs to 204 residues: MVCGGFSCSKNCLCALNLLYTLVSLLLIGIAAWGIGFGLISSLRVVGVVIAVGIFLFLIALVGLIGAVKHHQVLLFFYMIILLLVFIVQFSVSCACLALNREQQGQLLEVGWNNTASARNDIQRNLNCCGFRSYNPNDTCPASCAKSTQKCSSCAPIIGEYAGEVLRFVGGIGLFFSFTEILGVWLTYRYRNQKDPRANPSAFL.

At 1-19 the chain is on the cytoplasmic side; it reads MVCGGFSCSKNCLCALNLL. A helical membrane pass occupies residues 20–40; the sequence is YTLVSLLLIGIAAWGIGFGLI. The Extracellular segment spans residues 41–44; the sequence is SSLR. A helical transmembrane segment spans residues 45 to 65; the sequence is VVGVVIAVGIFLFLIALVGLI. At 66 to 72 the chain is on the cytoplasmic side; it reads GAVKHHQ. Residues 73 to 93 traverse the membrane as a helical segment; that stretch reads VLLFFYMIILLLVFIVQFSVS. Topologically, residues 94–167 are extracellular; that stretch reads CACLALNREQ…IGEYAGEVLR (74 aa). 2 N-linked (GlcNAc...) asparagine glycosylation sites follow: Asn-113 and Asn-137. Ser-143 is subject to Phosphoserine. Residues 168–188 traverse the membrane as a helical segment; sequence FVGGIGLFFSFTEILGVWLTY. At 189 to 204 the chain is on the cytoplasmic side; that stretch reads RYRNQKDPRANPSAFL.

Belongs to the tetraspanin (TM4SF) family.

It localises to the membrane. The chain is Tetraspanin-13 (Tspan13) from Mus musculus (Mouse).